The chain runs to 518 residues: Sensor protein kinase HptS (518 aa).

2 helical membrane-spanning segments follow: residues 20 to 40 (IFPV…IYIW) and 222 to 242 (GITL…FGFI). Residues 297 to 513 (EQLIHSIEHT…LICYKIPLSR (217 aa)) enclose the Histidine kinase domain. Phosphohistidine; by autocatalysis is present on His-325.

In terms of processing, autophosphorylated.

It is found in the cell membrane. It catalyses the reaction ATP + protein L-histidine = ADP + protein N-phospho-L-histidine.. In terms of biological role, member of the two-component regulatory system HptS/HptR that regulates genes involved in hexose phosphate transport system in response to changes in extracellular phosphate sources. May act as a sensor protein kinase which is autophosphorylated at a histidine residue and transfers its phosphate group to the conserved aspartic acid residue in the regulatory domain of HptS. In turn, HptS antagonizes CcpA-dependent transcription of a subset of CcpA-regulated genes involved in antibiotic susceptibility. This Staphylococcus aureus (strain Mu50 / ATCC 700699) protein is Sensor protein kinase HptS (hptS).